A 218-amino-acid polypeptide reads, in one-letter code: Ras-related protein R-Ras (218 aa).

The segment at 1 to 30 (MSSGAASGTGRGRPRGGGPGPRDPPPGETH) is disordered. Residues 7 to 20 (SGTGRGRPRGGGPG) are compositionally biased toward gly residues. 36–44 (GGGGVGKSA) contributes to the GTP binding site. The Effector region motif lies at 58 to 66 (YDPTIEDSY). GTP is bound by residues 83-87 (DTAGQ), 142-145 (NKAD), and 172-174 (SAK). Cys-215 is modified (cysteine methyl ester). Residue Cys-215 is the site of S-geranylgeranyl cysteine attachment. Positions 216 to 218 (VLL) are cleaved as a propeptide — removed in mature form.

The protein belongs to the small GTPase superfamily. Ras family. Interacts with PLCE1. Interacts (active GTP-bound form preferentially) with RGS14. Interacts with OSBPL3. Interacts with ZDHHC19. In terms of processing, S-palmitoylated by ZDHHC19, leading to increased association with membranes and with rafts/caveolae as well as enhanced cell viability.

It is found in the cell membrane. It carries out the reaction GTP + H2O = GDP + phosphate + H(+). Its function is as follows. GTP-binding protein with GTPase activity, likely involved in the regulation of MAPK signaling pathway and thereby controlling multiple cellular processes. Regulates the organization of the actin cytoskeleton. With OSPBL3, modulates integrin beta-1 (ITGB1) activity. In Rattus norvegicus (Rat), this protein is Ras-related protein R-Ras (Rras).